Here is a 481-residue protein sequence, read N- to C-terminus: Glycogen synthase (481 aa).

Residue Lys15 coordinates ADP-alpha-D-glucose.

Belongs to the glycosyltransferase 1 family. Bacterial/plant glycogen synthase subfamily.

It catalyses the reaction [(1-&gt;4)-alpha-D-glucosyl](n) + ADP-alpha-D-glucose = [(1-&gt;4)-alpha-D-glucosyl](n+1) + ADP + H(+). It functions in the pathway glycan biosynthesis; glycogen biosynthesis. In terms of biological role, synthesizes alpha-1,4-glucan chains using ADP-glucose. The sequence is that of Glycogen synthase from Mesorhizobium japonicum (strain LMG 29417 / CECT 9101 / MAFF 303099) (Mesorhizobium loti (strain MAFF 303099)).